We begin with the raw amino-acid sequence, 341 residues long: Elongation factor Ts (341 aa).

Residues 80-83 (TDFV) form an involved in Mg(2+) ion dislocation from EF-Tu region.

This sequence belongs to the EF-Ts family.

It localises to the cytoplasm. Functionally, associates with the EF-Tu.GDP complex and induces the exchange of GDP to GTP. It remains bound to the aminoacyl-tRNA.EF-Tu.GTP complex up to the GTP hydrolysis stage on the ribosome. In Lactobacillus helveticus (strain DPC 4571), this protein is Elongation factor Ts.